We begin with the raw amino-acid sequence, 297 residues long: 1D-myo-inositol 2-acetamido-2-deoxy-alpha-D-glucopyranoside deacetylase (297 aa).

Residues H14, D17, and H149 each coordinate Zn(2+).

The protein belongs to the MshB deacetylase family. Zn(2+) is required as a cofactor.

It carries out the reaction 1D-myo-inositol 2-acetamido-2-deoxy-alpha-D-glucopyranoside + H2O = 1D-myo-inositol 2-amino-2-deoxy-alpha-D-glucopyranoside + acetate. Functionally, catalyzes the deacetylation of 1D-myo-inositol 2-acetamido-2-deoxy-alpha-D-glucopyranoside (GlcNAc-Ins) in the mycothiol biosynthesis pathway. The sequence is that of 1D-myo-inositol 2-acetamido-2-deoxy-alpha-D-glucopyranoside deacetylase from Thermomonospora curvata (strain ATCC 19995 / DSM 43183 / JCM 3096 / KCTC 9072 / NBRC 15933 / NCIMB 10081 / Henssen B9).